The following is a 43-amino-acid chain: MQDIKTYLSTAPVLATFWFGLLAGLLIEINRFFPDALTFSFAF.

The chain crosses the membrane as a helical span at residues 7-27 (YLSTAPVLATFWFGLLAGLLI).

It belongs to the PsaJ family.

Its subcellular location is the plastid. It localises to the chloroplast thylakoid membrane. May help in the organization of the PsaE and PsaF subunits. In Gnetum parvifolium (Small-leaved jointfir), this protein is Photosystem I reaction center subunit IX.